The primary structure comprises 114 residues: UPF0757 protein YmgG (114 aa).

Belongs to the UPF0757 family.

This Escherichia fergusonii (strain ATCC 35469 / DSM 13698 / CCUG 18766 / IAM 14443 / JCM 21226 / LMG 7866 / NBRC 102419 / NCTC 12128 / CDC 0568-73) protein is UPF0757 protein YmgG.